A 208-amino-acid polypeptide reads, in one-letter code: Probable nicotinate-nucleotide adenylyltransferase (208 aa).

Belongs to the NadD family.

It carries out the reaction nicotinate beta-D-ribonucleotide + ATP + H(+) = deamido-NAD(+) + diphosphate. It participates in cofactor biosynthesis; NAD(+) biosynthesis; deamido-NAD(+) from nicotinate D-ribonucleotide: step 1/1. Functionally, catalyzes the reversible adenylation of nicotinate mononucleotide (NaMN) to nicotinic acid adenine dinucleotide (NaAD). This chain is Probable nicotinate-nucleotide adenylyltransferase, found in Kineococcus radiotolerans (strain ATCC BAA-149 / DSM 14245 / SRS30216).